Here is a 105-residue protein sequence, read N- to C-terminus: MAESPFKADIERAQKELSEKMTPGAIVYIPGSSVINKTGSWRVFKPEFNRDKCVRCYLCYIYCPEPAIYLDEEGYPVFDYDYCKGCGICANECPTKAIEMVREVK.

4Fe-4S ferredoxin-type domains lie at 44–73 (FKPEFNRDKCVRCYLCYIYCPEPAIYLDEE) and 74–103 (GYPVFDYDYCKGCGICANECPTKAIEMVRE). 8 residues coordinate [4Fe-4S] cluster: Cys-53, Cys-56, Cys-59, Cys-63, Cys-83, Cys-86, Cys-89, and Cys-93.

In terms of assembly, heterotetramer of one alpha, one beta, one delta and one gamma chain. [4Fe-4S] cluster serves as cofactor.

The sequence is that of Pyruvate synthase subunit PorD (porD) from Pyrococcus furiosus (strain ATCC 43587 / DSM 3638 / JCM 8422 / Vc1).